The chain runs to 200 residues: NADH-quinone oxidoreductase subunit C (200 aa).

It belongs to the complex I 30 kDa subunit family. As to quaternary structure, NDH-1 is composed of 14 different subunits. Subunits NuoB, C, D, E, F, and G constitute the peripheral sector of the complex.

Its subcellular location is the cell inner membrane. The catalysed reaction is a quinone + NADH + 5 H(+)(in) = a quinol + NAD(+) + 4 H(+)(out). Its function is as follows. NDH-1 shuttles electrons from NADH, via FMN and iron-sulfur (Fe-S) centers, to quinones in the respiratory chain. The immediate electron acceptor for the enzyme in this species is believed to be ubiquinone. Couples the redox reaction to proton translocation (for every two electrons transferred, four hydrogen ions are translocated across the cytoplasmic membrane), and thus conserves the redox energy in a proton gradient. This Paraburkholderia phytofirmans (strain DSM 17436 / LMG 22146 / PsJN) (Burkholderia phytofirmans) protein is NADH-quinone oxidoreductase subunit C.